An 859-amino-acid polypeptide reads, in one-letter code: Cadherin-related family member 1 (859 aa).

Residues 1–19 form the signal peptide; it reads MRRCRWAALALGLLRLCLA. At 20–700 the chain is on the extracellular side; it reads QANFAPHFFD…LIQTKDNPMK (681 aa). Cadherin domains follow at residues 36-135, 136-246, 247-353, 359-472, 473-576, and 573-688; these read NGNM…APRF, IQEP…APVF, VGTP…PPTF, PQNR…VPKF, DSLY…PPQF, and PPQF…SPMA. 2 N-linked (GlcNAc...) asparagine glycosylation sites follow: Asn-58 and Asn-89. Residue Asn-296 is glycosylated (N-linked (GlcNAc...) asparagine). A helical membrane pass occupies residues 701–721; it reads AVGVLAGTMATVVAITVLIST. Residues 722-859 are Cytoplasmic-facing; that stretch reads ATFWRNKKSN…KKSVHNKAYF (138 aa). A disordered region spans residues 770 to 838; sequence KEKPPNENCN…PKTMGSPVQS (69 aa). Over residues 775–791 the composition is skewed to low complexity; it reads NENCNNNSPESSLLPRA.

Interacts with PROM1. Undergoes proteolytic cleavage; produces a soluble 95 kDa N-terminal fragment and a 25 kDa cell-associated C-terminal fragment.

It is found in the cell membrane. Its function is as follows. Potential calcium-dependent cell-adhesion protein. May be required for the structural integrity of the outer segment (OS) of photoreceptor cells. The chain is Cadherin-related family member 1 from Homo sapiens (Human).